Here is a 483-residue protein sequence, read N- to C-terminus: Serine hydroxymethyltransferase, cytosolic (483 aa).

Residue Lys257 is modified to N6-(pyridoxal phosphate)lysine.

This sequence belongs to the SHMT family. Homotetramer. Identified in complex with ABRAXAS2 and the other subunits of the BRISC complex, at least composed of ABRAXAS2, BRCC3/BRCC36, BABAM2 and BABAM1/NBA1. It depends on pyridoxal 5'-phosphate as a cofactor.

Its subcellular location is the cytoplasm. The catalysed reaction is (6R)-5,10-methylene-5,6,7,8-tetrahydrofolate + glycine + H2O = (6S)-5,6,7,8-tetrahydrofolate + L-serine. It participates in one-carbon metabolism; tetrahydrofolate interconversion. In terms of biological role, interconversion of serine and glycine. The chain is Serine hydroxymethyltransferase, cytosolic (SHMT1) from Pongo abelii (Sumatran orangutan).